An 831-amino-acid polypeptide reads, in one-letter code: Zinc phosphodiesterase ELAC protein 2 (831 aa).

A mitochondrion-targeting transit peptide spans 1–16; that stretch reads MWALRSLLRPLGLRTM. Disordered regions lie at residues 15 to 47 and 179 to 227; these read TMSQ…PGGP and SERR…ANRK. Residues 186-212 show a composition bias toward polar residues; sequence QQPSQSPRTSPNRLSPKQSSDSGSAEN. Residues serine 191, serine 195, serine 200, serine 204, and serine 732 each carry the phosphoserine modification. The tract at residues 791–831 is disordered; the sequence is LTQQADSPEDREPQQKRAHTDEPHSPQSKKESVANTLGARV. At threonine 792 the chain carries Phosphothreonine. Phosphoserine occurs at positions 797 and 815. Residues 798 to 822 show a composition bias toward basic and acidic residues; that stretch reads PEDREPQQKRAHTDEPHSPQSKKES.

It belongs to the RNase Z family. As to quaternary structure, homodimer. Interacts with PTCD1. The cofactor is Zn(2+).

The protein localises to the mitochondrion. Its subcellular location is the mitochondrion matrix. The protein resides in the mitochondrion nucleoid. It is found in the nucleus. It catalyses the reaction Endonucleolytic cleavage of RNA, removing extra 3' nucleotides from tRNA precursor, generating 3' termini of tRNAs. A 3'-hydroxy group is left at the tRNA terminus and a 5'-phosphoryl group is left at the trailer molecule.. In terms of biological role, zinc phosphodiesterase, which displays mitochondrial tRNA 3'-processing endonuclease activity. Involved in tRNA maturation, by removing a 3'-trailer from precursor tRNA. Associates with mitochondrial DNA complexes at the nucleoids to initiate RNA processing and ribosome assembly. This is Zinc phosphodiesterase ELAC protein 2 (Elac2) from Mus musculus (Mouse).